Consider the following 450-residue polypeptide: Transcription factor SCREAM2 (450 aa).

Disordered regions lie at residues 1–47 (MNSD…NQND), 207–231 (RQSSSSKMCNSESSSEMRKSSYERE), and 244–265 (GLNYESDDHNTNNNKGKKKGMP). A compositionally biased stretch (low complexity) spans 209 to 220 (SSSSKMCNSESS). Positions 221 to 230 (SEMRKSSYER) are enriched in basic and acidic residues. A bHLH domain is found at 263-312 (GMPAKNLMAERRRRKKLNDRLYMLRSVVPKISKMDRASILGDAIDYLKEL). The region spanning 378-450 (NIHMFCGRRP…LDTAGYAGLV (73 aa)) is the ACT domain.

In terms of assembly, homodimer. Heterodimers with SPCH, MUTE, and FAMA. Expressed constitutively in roots, leaves, stems, and flowers. Broad expression within stomatal cell lineages of leaf epidermis, except in mature guard-cells.

It is found in the nucleus. Its function is as follows. Mediates stomatal differentiation in the epidermis probably by controlling successive roles of SPCH, MUTE, and FAMA. Functions as a dimer with SPCH during stomatal initiation. This Arabidopsis thaliana (Mouse-ear cress) protein is Transcription factor SCREAM2 (SCRM2).